Here is a 1903-residue protein sequence, read N- to C-terminus: MMDSGMEEDVTLPGTLSGCSGLHPVLPSDLDVISDTTGLGNGVLPIMSEEKVSPTRARNMKDFENQITELKKENFNLKLRIYFLEERIQQEFAGPTEHIYKKNIELKVEVESLKRELQERDQLLVKASKAVESLAEGGGSEIQRVKEDARKKVQQVEELLTKRIHLLEEDVKAAQAELEKAFAGTETEKALRLSLESKLSAMKKMQEGDLEMTLALEEKDRLIEELKLSLKSKEALIQCLKEEKSQMASPDENVSSGELRGLSATLREEKERDAEERQKERNHFEERIQALQEDLREKEREIATEKKNSLKRDKAIQGLTMALKSKEKEVEELNSIIKELTADSTQSREAPLKTQVSEFEVRESENCEAALAEKEALLAKLHSENVTKNTENHRLLRNVKKVTQELNDLKKEKLRLERDLEEAHREGNRGARTIHDLRNEVEKLRKEVCEREKAVEKHYKSLPGESSSKFHSQEQVVKGLTESASQEDLLLQKSNEKDLEAIQQNCYLMTAEELKFGSDGLITEKCSQQSPDSKLIFSKEKQQSEYEGLTGDLKTEQNVYAHLAKNLQDTDSKLQAELKRVLALRKQLEQDVLAYRNLQTALQEQLSEIRKREEEPFSFYSDQTSYLSICLEEHSQFQLEHFSQEEIKKKVIDLIQLVKDLHADNQHLKKTIFDISCMGVQGNDRLESTKQAELMASKADEDTLKFKADDENHFQSDQHLEQSREIMEDYAEGGGKDGYVRHMDSNILDHDGAHTPDTSEDHSLEDELLSLLATFFSKKATPSLESRPDLLKALGALLLERICLAEQGSPGDHSDSKAEKALEQVAVRLRDELGHSCLANSFSKSHSELKSPRGTWLVKTGDEAKVELKSVSVQTMTIEDSTRGFKPERKREAWAGKPEEAVFSTELESEALGEMPGLQATHLSFPSAIDKDDQKTGLLIQLKTPELLENLYNLPASQEVVAQLQGQVLELQKELKEYKIRNKQLLDKLILAEAMMEGMAVPNSTPVNVPAAQAVVRTAFQGKPGEQEGHETTHSAGRDKEVDSDQYTSFEIDSEICPPDDLALLPACKENLEDFLGPPSIATYLDSKSQLSVKVSVVGTDQSENINLPDDTEALKQKIHDLQTELEGYRNIIVQLQKHSQCSEAIITVLCGTEGAQDGLNKPKGHIDEEEMTFSSLHQVRYVKHMKILRPLTPEIIDGKMLESLKQQLVEQEQELQKEQDLNLELFGEIHNLQNKFRDLSPSRYDSLVQSQARELSLQRQQIKDSHDICVVCHQHMSTMIKAFEELLQASDVDSCVAEGFREQLTQCAGLLEQLEKLFLHGKSARVEPHTQTELLRRLRTEEDNLPYQHLLPESPEPSASHALSDDEMSEKSFLSREPKPDSETEKYPTIASRFPQDLLMEHIQEIRTLRKHLEESIKTNEKLRKQLERQGCETDQGSTNVSAYSSELHNSLTSEIQFLRKQNEALSTMLEKGSKEKQKENEKLRESLARKTESLEHLQLEYASVREENERLRRDISEKERQNQQLTQEVCSSLQELSRVQEEAKSRQQLLLQKDELLQSLQMELKVYEKLAEEHQKLQQESRGEACGGGQKGQDPFSNLHGLLKEIQVLRDQAERSIQTNNTLKSKLEKQLSQGSKQAQEGALTLAVQALSVTEWSLQLDKHDVNKCPEASDNSFDLFESTQAMAPKSASETPVLSGTDVDSLSCDSTSSATSPSCMPCLVAGRHLWASKSGHHMLCLIEDYDALYKQISWGQTLLAKMDIQTQEALSPTSQKLGPKASFSVPLSKFLSSMNTAKLILEKASRLLKLFWRVSVPTNGQCSLHCDQIGEMKAEITKLHKKLFEQEKKLQNTAKLLQQSKHQEKIIFDQLVITHQVLRKARGNLELRPRAAHPGTSSPSRPGS.

Positions 51 to 94 are CM1 motif; interacts with the gTuRC; the sequence is KVSPTRARNMKDFENQITELKKENFNLKLRIYFLEERIQQEFAG. A disordered region spans residues 244 to 282; it reads KSQMASPDENVSSGELRGLSATLREEKERDAEERQKERN. Residues 246–256 are compositionally biased toward polar residues; the sequence is QMASPDENVSS. Basic and acidic residues predominate over residues 266-282; that stretch reads LREEKERDAEERQKERN. Phosphoserine occurs at positions 485 and 544. Residues 1022–1044 are disordered; it reads GKPGEQEGHETTHSAGRDKEVDS. Residues 1025–1043 are compositionally biased toward basic and acidic residues; sequence GEQEGHETTHSAGRDKEVD. At threonine 1193 the chain carries Phosphothreonine. Phosphoserine occurs at positions 1241 and 1243. The interval 1349-1387 is disordered; sequence QHLLPESPEPSASHALSDDEMSEKSFLSREPKPDSETEK. Residues 1370–1387 show a composition bias toward basic and acidic residues; the sequence is SEKSFLSREPKPDSETEK. Residues serine 1495, serine 1673, and serine 1676 each carry the phosphoserine modification. Residues 1736–1778 are interaction with CDK5R1; that stretch reads HMLCLIEDYDALYKQISWGQTLLAKMDIQTQEALSPTSQKLGP. 2 required for centrosomal attachment, Golgi localization and CALM1 interaction regions span residues 1736–1903 and 1871–1880; these read HMLC…RPGS and VITHQVLRKA. Residues 1883-1903 form a disordered region; sequence NLELRPRAAHPGTSSPSRPGS. The span at 1894 to 1903 shows a compositional bias: polar residues; that stretch reads GTSSPSRPGS. A Phosphoserine modification is found at serine 1903.

As to quaternary structure, homodimer. Interacts with CDK5R1 (p35 form). CDK5RAP1, CDK5RAP2 and CDK5RAP3 show competitive binding to CDK5R1. May form a complex with CDK5R1 and CDK5. Interacts with pericentrin/PCNT; the interaction is leading to centrosomal and Golgi localization of CDK5RAP2 and PCNT. Interacts with AKAP9; the interaction targets CDK5RAP2 and AKAP9 to Golgi apparatus. Interacts with TUBG1; the interaction is leading to the centrosomal localization of CDK5RAP2 and TUBG1. Interacts with TUBGCP3. Interacts with CALM1. Interacts with CDC20. Interacts with CEP68; degradation of CEP68 in early mitosis leads to removal of CDK5RAP2 from the centrosome which promotes centriole disengagement and subsequent centriole separation. Interacts with NCKAP5L. Interacts with LGALS3BP; this interaction may connect the pericentrosomal complex to the gamma-tubulin ring complex (gTuRC) to promote microtubule assembly and acetylation. Contrary to human, chimpanzee, bovine and dog orthologous proteins, does not interact with EB1/MAPRE1, possibly due to a divergence at the level of the critical residue 939, which is a proline in MAPRE1-binding orthologs and a leucine in mouse and rat. Interacts with CCDC66. Associates (via CM1 motif) with TUBGCP2 of the gTuRC; the interaction plays a role in gTuRC activation. Post-translationally, phosphorylated in vitro by CDK5.

Its subcellular location is the cytoplasm. It localises to the cytoskeleton. The protein localises to the microtubule organizing center. The protein resides in the centrosome. It is found in the golgi apparatus. In terms of biological role, potential regulator of CDK5 activity via its interaction with CDK5R1. Negative regulator of centriole disengagement (licensing) which maintains centriole engagement and cohesion. Involved in regulation of mitotic spindle orientation. Plays a role in the spindle checkpoint activation by acting as a transcriptional regulator of both BUBR1 and MAD2 promoter. Together with EB1/MAPRE1, may promote microtubule polymerization, bundle formation, growth and dynamics at the plus ends. Regulates centrosomal maturation by recruitment of the gamma-tubulin ring complex (gTuRC) onto centrosomes. In complex with PDE4DIP isoform 13/MMG8/SMYLE, MAPRE1 and AKAP9, contributes to microtubules nucleation and extension from the centrosome to the cell periphery. Required for the recruitment of AKAP9 to centrosomes. Plays a role in neurogenesis. The chain is CDK5 regulatory subunit-associated protein 2 (Cdk5rap2) from Rattus norvegicus (Rat).